A 172-amino-acid polypeptide reads, in one-letter code: Ubiquitin-conjugating enzyme E2 2 (172 aa).

In terms of domain architecture, UBC core spans 4–150 (PARRRLMRDF…VKETVEKSWE (147 aa)). Catalysis depends on Cys-88, which acts as the Glycyl thioester intermediate. At Ser-120 the chain carries Phosphoserine; by SGV1. The disordered stretch occupies residues 145–172 (VEKSWEDDMDDMDDDDDDDDDDDDDEAD). The segment covering 151–172 (DDMDDMDDDDDDDDDDDDDEAD) has biased composition (acidic residues).

The protein belongs to the ubiquitin-conjugating enzyme family. As to quaternary structure, forms a heterodimer complexes with the E3 enzymes BRE1, RAD18 and UBR1. Also interacts with UBR2, RTF1, PAF1 and the RNA polymerase II hyperphosphorylated form. The interaction with RNA polymerase II is BRE1- and PAF1-dependent. Post-translationally, the N-terminus is blocked.

It localises to the cytoplasm. Its subcellular location is the nucleus. It carries out the reaction S-ubiquitinyl-[E1 ubiquitin-activating enzyme]-L-cysteine + [E2 ubiquitin-conjugating enzyme]-L-cysteine = [E1 ubiquitin-activating enzyme]-L-cysteine + S-ubiquitinyl-[E2 ubiquitin-conjugating enzyme]-L-cysteine.. It functions in the pathway protein modification; protein ubiquitination. In terms of biological role, E2 ubiquitin-conjugating enzyme that accepts ubiquitin from the ubiquitin-activating enzyme E1 and transfers it to a E3 ubiquitin-protein ligase. In association with the E3 enzyme BRE1 and LGE1, it plays a role in transcription regulation by catalyzing the monoubiquitination of histone H2B to form H2BK123ub1. H2BK123ub1 gives a specific tag for epigenetic transcriptional activation, elongation by RNA polymerase II, telomeric silencing, and is also a prerequisite for H3K4me and H3K79me formation. In association with the E3 enzyme RAD18, it catalyzes the monoubiquitination of POL30 'Lys-164', involved in postreplication repair of UV-damaged DNA. The RAD6/UBC2-RAD18 complex is also involved in prevention of spontaneous mutations caused by 7,8-dihydro-8-oxoguanine. In association with the E3 enzyme UBR1, is involved in N-end rule-dependent protein degradation. Also involved in sporulation. This Saccharomyces cerevisiae (strain ATCC 204508 / S288c) (Baker's yeast) protein is Ubiquitin-conjugating enzyme E2 2 (RAD6).